A 93-amino-acid polypeptide reads, in one-letter code: Large ribosomal subunit protein uL23cz/uL23cy (93 aa).

Belongs to the universal ribosomal protein uL23 family. Part of the 50S ribosomal subunit.

Its subcellular location is the plastid. It is found in the chloroplast. Binds to 23S rRNA. This is Large ribosomal subunit protein uL23cz/uL23cy (rpl23-A) from Eucalyptus globulus subsp. globulus (Tasmanian blue gum).